Consider the following 962-residue polypeptide: Synphilin-1 (962 aa).

Disordered regions lie at residues 80–99 (SPLKHQPETLENNENEDQKN), 104–137 (YQKGGETDQGPQPEELSPEDGVGGLPGKGSEPSQ), and 222–249 (TALRDQHKLSTEDSESSPALGKCGPAYE). 4 ANK repeats span residues 348-379 (NGNNLLHIAASKGHAECLQHLTSLMGEDCLNE), 383-412 (EQLTPAGLAIKNGQLECVRWMVSETEAIAE), 418-447 (DFPSLIHYAGCYGQEKILLWLLQFMQEQGI), and 455-484 (EGNSAVHVASQHGYLGCIQTLVEYGANVTM). Residues 522–548 (VKLTKQLKEQTVERVTLQSQLQQLLEA) are a coiled coil. A disordered region spans residues 548–590 (AQKSEGKSLPSSPSSPSSPASTKSQWKALDTDEESTGKSKVGA). Positions 554 to 571 (KSLPSSPSSPSSPASTKS) are enriched in low complexity. An ANK 5 repeat occupies 602–631 (VSSRARTKGKDEDSDKILRQLLGKEISENV). Positions 667–684 (RQLMQRSLSESDTDSNNS) are enriched in low complexity. The segment at 667-852 (RQLMQRSLSE…QRTSESGEQM (186 aa)) is disordered. Basic and acidic residues predominate over residues 685–699 (EDPKNTPVKRADRPR). One copy of the ANK 6 repeat lies at 698–728 (PRPQPIVESVENVDSAESLHLMIKKHSLASG). The segment covering 772 to 790 (PSTEATQSSPDSTAAQKVA) has biased composition (polar residues). Residues 831–840 (NGEKDKDKGR) show a composition bias toward basic and acidic residues.

Associates with SNCA, RNF19A and PRKN. Ubiquitinated; mediated by SIAH1 or RNF19A and leading to its subsequent proteasomal degradation.

The polypeptide is Synphilin-1 (Sncaip) (Mus musculus (Mouse)).